The chain runs to 190 residues: Nuclear transcription factor Y subunit A-7 (190 aa).

A disordered region spans residues 1-33; it reads MTSSIHELSDNIGSHEKQEQRDSHFQPPIPSAR. A compositionally biased stretch (basic and acidic residues) spans 7–24; sequence ELSDNIGSHEKQEQRDSH. The Subunit association domain (SAD) signature appears at 103–126; sequence FVNAKQYHGILRRRQSRARLESQN. The segment at residues 133 to 158 is a DNA-binding region (NFYA/HAP2-type); it reads KPYLHESRHLHAIRRPRGCGGRFLNA. Residues 147 to 190 form a disordered region; it reads RPRGCGGRFLNAKKEDEHHEDSSHEEKSNLSAGKSAMAASSGTS. Positions 158–174 are enriched in basic and acidic residues; sequence AKKEDEHHEDSSHEEKS. Residues 177–190 are compositionally biased toward low complexity; the sequence is SAGKSAMAASSGTS.

The protein belongs to the NFYA/HAP2 subunit family. Heterotrimeric transcription factor composed of three components, NF-YA, NF-YB and NF-YC. NF-YB and NF-YC must interact and dimerize for NF-YA association and DNA binding.

It localises to the nucleus. Its function is as follows. Stimulates the transcription of various genes by recognizing and binding to a CCAAT motif in promoters. The protein is Nuclear transcription factor Y subunit A-7 (NFYA7) of Arabidopsis thaliana (Mouse-ear cress).